The chain runs to 260 residues: Phosphate import ATP-binding protein PstB (260 aa).

Residues 14-255 (IETENLNLFY…PKNTKTEEYI (242 aa)) enclose the ABC transporter domain. Residue 46-53 (GPSGCGKS) coordinates ATP.

It belongs to the ABC transporter superfamily. Phosphate importer (TC 3.A.1.7) family. In terms of assembly, the complex is composed of two ATP-binding proteins (PstB), two transmembrane proteins (PstC and PstA) and a solute-binding protein (PstS).

It is found in the cell inner membrane. It carries out the reaction phosphate(out) + ATP + H2O = ADP + 2 phosphate(in) + H(+). In terms of biological role, part of the ABC transporter complex PstSACB involved in phosphate import. Responsible for energy coupling to the transport system. This is Phosphate import ATP-binding protein PstB from Borreliella afzelii (strain PKo) (Borrelia afzelii).